The sequence spans 237 residues: 3-oxoacyl-[acyl-carrier-protein] reductase (237 aa).

Position 1 is an N-acetylmethionine (Met-1). NADP(+) contacts are provided by residues 11-14 (SRGI) and 34-35 (RN). Position 40 is an N6-acetyllysine (Lys-40). NADP(+) contacts are provided by residues Asp-56 and 83 to 85 (AAG). Lys-96 bears the N6-acetyllysine mark. Ser-135 is a binding site for substrate. Residues Tyr-148, Lys-152, and 181–183 (VHT) each bind NADP(+). The Proton acceptor role is filled by Tyr-148. Position 195 is an N6-acetyllysine (Lys-195).

This sequence belongs to the short-chain dehydrogenases/reductases (SDR) family. In terms of assembly, homotetramer (in vitro). Heterotetramer with HSD17B8; contains two molecules each of HSD17B8 and CBR4. Does not form homotetramers when HSD17B8 is coexpressed, only heterotetramers (in vitro). In terms of tissue distribution, detected in liver and kidney (at protein level). Displays the highest expression in neuronal and muscle tissues.

The protein resides in the mitochondrion matrix. The catalysed reaction is a (3R)-hydroxyacyl-[ACP] + NADP(+) = a 3-oxoacyl-[ACP] + NADPH + H(+). The enzyme catalyses a quinone + NADPH + H(+) = a quinol + NADP(+). Its pathway is lipid metabolism; fatty acid biosynthesis. Component of the heterotetramer complex KAR (3-ketoacyl-[acyl carrier protein] reductase or 3-ketoacyl-[ACP] reductase) that forms part of the mitochondrial fatty acid synthase (mtFAS). Beta-subunit of the KAR heterotetramer complex, responsible for the 3-ketoacyl-ACP reductase activity of the mtFAS, reduces 3-oxoacyl-[ACP] to (3R)-hydroxyacyl-[ACP] in a NADPH-dependent manner with no chain length preference, thereby participating in mitochondrial fatty acid biosynthesis. The homotetramer has NADPH-dependent quinone reductase activity (in vitro), hence could play a role in protection against cytotoxicity of exogenous quinones. As a heterotetramer, it can also reduce 9,10-phenanthrenequinone, 1,4-benzoquinone and various other o-quinones and p-quinones (in vitro). In Homo sapiens (Human), this protein is 3-oxoacyl-[acyl-carrier-protein] reductase (CBR4).